Consider the following 388-residue polypeptide: MSEQIVTSEIITPVVPDKNGKINLLDLNRQQMREFFKELGEKPFRADQVMKWMYHYCSDNFDEMTDINKVLRGKLKEVAEIRAPEVVEEQRSSDGTIKWAIAVGDQRVETVYIPEDDRATLCVSSQVGCALECKFCSTAQQGFNRNLRVSEIIGQVWRAAKIVGAAKVTGQRPITNVVMMGMGEPLLNLTNVVPAMEIMLDDFGFGLSKRRVTLSTSGVVPALDKLGDMIDVALAISLHAPNDEIRDEIVPINRKYNIETFLDAVRRYLQKSNANQGRVTIEYVMLDHINDGTEHAHQLAELLKDTPCKINLIPWNPFPGAPYGRSSNSRIDRFSKVLMSYGFTTIVRKTRGDDIDAACGQLAGDVIDRTKRTLRKRMQGEAIDIKAV.

Catalysis depends on glutamate 109, which acts as the Proton acceptor. The Radical SAM core domain maps to 115–354; it reads EDDRATLCVS…TIVRKTRGDD (240 aa). The cysteines at positions 122 and 359 are disulfide-linked. Residues cysteine 129, cysteine 133, and cysteine 136 each coordinate [4Fe-4S] cluster. S-adenosyl-L-methionine is bound by residues 183 to 184, serine 215, 237 to 239, and asparagine 316; these read GE and SLH. The S-methylcysteine intermediate role is filled by cysteine 359.

The protein belongs to the radical SAM superfamily. RlmN family. The cofactor is [4Fe-4S] cluster.

Its subcellular location is the cytoplasm. The enzyme catalyses adenosine(2503) in 23S rRNA + 2 reduced [2Fe-2S]-[ferredoxin] + 2 S-adenosyl-L-methionine = 2-methyladenosine(2503) in 23S rRNA + 5'-deoxyadenosine + L-methionine + 2 oxidized [2Fe-2S]-[ferredoxin] + S-adenosyl-L-homocysteine. It carries out the reaction adenosine(37) in tRNA + 2 reduced [2Fe-2S]-[ferredoxin] + 2 S-adenosyl-L-methionine = 2-methyladenosine(37) in tRNA + 5'-deoxyadenosine + L-methionine + 2 oxidized [2Fe-2S]-[ferredoxin] + S-adenosyl-L-homocysteine. Functionally, specifically methylates position 2 of adenine 2503 in 23S rRNA and position 2 of adenine 37 in tRNAs. m2A2503 modification seems to play a crucial role in the proofreading step occurring at the peptidyl transferase center and thus would serve to optimize ribosomal fidelity. The polypeptide is Dual-specificity RNA methyltransferase RlmN (Citrobacter koseri (strain ATCC BAA-895 / CDC 4225-83 / SGSC4696)).